A 408-amino-acid polypeptide reads, in one-letter code: CinA-like protein (408 aa).

It belongs to the CinA family.

The chain is CinA-like protein from Thermotoga sp. (strain RQ2).